Reading from the N-terminus, the 252-residue chain is Adapter protein MecA (252 aa).

It belongs to the MecA family. As to quaternary structure, homodimer.

Enables the recognition and targeting of unfolded and aggregated proteins to the ClpC protease or to other proteins involved in proteolysis. The chain is Adapter protein MecA from Streptococcus uberis (strain ATCC BAA-854 / 0140J).